A 178-amino-acid polypeptide reads, in one-letter code: Caveolin-1 (178 aa).

Residue S2 is modified to N-acetylserine. A Phosphoserine modification is found at S2. The interval 2 to 94 (SGGKYVDSEG…WKASFTTFTV (93 aa)) is required for homooligomerization. Topologically, residues 2–104 (SGGKYVDSEG…TKYWFYRLLS (103 aa)) are cytoplasmic. An N6-acetyllysine; alternate modification is found at K5. K5 is covalently cross-linked (Glycyl lysine isopeptide (Lys-Gly) (interchain with G-Cter in ubiquitin); alternate). The residue at position 6 (Y6) is a Phosphotyrosine. S9 carries the post-translational modification Phosphoserine. A Phosphotyrosine; by ABL1 modification is found at Y14. Position 25 is a phosphotyrosine (Y25). Residues K26, K30, K39, K47, and K57 each participate in a glycyl lysine isopeptide (Lys-Gly) (interchain with G-Cter in ubiquitin) cross-link. An interaction with CAVIN3 region spans residues 82 to 94 (DGIWKASFTTFTV). Residues 105–125 (ALFGIPMALIWGIYFAILSFL) constitute an intramembrane region (helical). The Cytoplasmic segment spans residues 126 to 178 (HIWAVVPCIKSFLIEIQCISRVYSIYVHTFCDPLFEAIGKIFSNIRINMQKEI). The interval 131–142 (VPCIKSFLIEIQ) is interacts with SPRY1, SPRY2, SPRY3 and SPRY4. Residues C133, C143, and C156 are each lipidated (S-palmitoyl cysteine). The interval 149-160 (SIYVHTFCDPLF) is interacts with SPRY1, SPRY2, and SPRY4. Positions 167–178 (FSNIRINMQKEI) are interacts with SPRY1, SPRY2, SPRY3 and SPRY4.

Belongs to the caveolin family. Homooligomer. Interacts with GLIPR2. Interacts with NOSTRIN. Interacts with SNAP25 and STX1A. Interacts (via the N-terminus) with DPP4; the interaction is direct. Interacts with CTNNB1, CDH1 and JUP. Interacts with PACSIN2; this interaction induces membrane tubulation. Interacts with SLC7A9. Interacts with BMX and BTK. Interacts with TGFBR1. Interacts with CAVIN3 (via leucine-zipper domain) in a cholesterol-sensitive manner. Interacts with CAVIN1. Interacts with EHD2 in a cholesterol-dependent manner. Forms a ternary complex with UBXN6 and VCP; mediates CAV1 targeting to lysosomes for degradation. Interacts with ABCG1; this interaction regulates ABCG1-mediated cholesterol efflux. Interacts with NEU3; this interaction enhances NEU3 sialidase activity within caveola. Interacts (via C-terminus) with SPRY1, SPRY2 (via C-terminus), SPRY3, and SPRY4. Interacts with IGFBP5; this interaction allows trafficking of IGFBP5 from the plasma membrane to the nucleus. Phosphorylated at Tyr-14 by ABL1 in response to oxidative stress. In terms of processing, ubiquitinated. Undergo monoubiquitination and multi- and/or polyubiquitination. Monoubiquitination of N-terminal lysines promotes integration in a ternary complex with UBXN6 and VCP which promotes oligomeric CAV1 targeting to lysosomes for degradation. Ubiquitinated by ZNRF1; leading to degradation and modulation of the TLR4-mediated immune response.

It localises to the golgi apparatus membrane. The protein localises to the cell membrane. The protein resides in the membrane. It is found in the caveola. Its subcellular location is the membrane raft. In terms of biological role, may act as a scaffolding protein within caveolar membranes. Forms a stable heterooligomeric complex with CAV2 that targets to lipid rafts and drives caveolae formation. Mediates the recruitment of CAVIN proteins (CAVIN1/2/3/4) to the caveolae. Interacts directly with G-protein alpha subunits and can functionally regulate their activity. Involved in the costimulatory signal essential for T-cell receptor (TCR)-mediated T-cell activation. Its binding to DPP4 induces T-cell proliferation and NF-kappa-B activation in a T-cell receptor/CD3-dependent manner. Recruits CTNNB1 to caveolar membranes and may regulate CTNNB1-mediated signaling through the Wnt pathway. Negatively regulates TGFB1-mediated activation of SMAD2/3 by mediating the internalization of TGFBR1 from membrane rafts leading to its subsequent degradation. Binds 20(S)-hydroxycholesterol (20(S)-OHC). The protein is Caveolin-1 (CAV1) of Muntiacus reevesi (Reeves' muntjac).